Here is a 177-residue protein sequence, read N- to C-terminus: CASP-like protein 4D1 (177 aa).

At 1 to 20 (MTAPTAPSMAAPPAPSMVSR) the chain is on the cytoplasmic side. A helical membrane pass occupies residues 21-41 (MTALFLRVLTFAFLMVSLVIM). Topologically, residues 42–66 (TTNTGTIEIGIDEFKVRSKDFYSYR) are extracellular. Residues 67–87 (YMLAAIAFGLTYTILQIALTL) traverse the membrane as a helical segment. Topologically, residues 88 to 107 (NHISKRNGAQTSGDGNLVFD) are cytoplasmic. The chain crosses the membrane as a helical span at residues 108 to 128 (FYGDKVVSYILATGAAAAFGA). Residues 129–153 (TKELKTQLAGLGGDKFFNKGYASAS) lie on the Extracellular side of the membrane. A helical transmembrane segment spans residues 154 to 174 (LLLLGFVCTAILSVFSSYALP). Residues 175–177 (KKV) lie on the Cytoplasmic side of the membrane.

Belongs to the Casparian strip membrane proteins (CASP) family. In terms of assembly, homodimer and heterodimers.

It is found in the cell membrane. This Populus trichocarpa (Western balsam poplar) protein is CASP-like protein 4D1.